The primary structure comprises 329 residues: Probable CTD kinase subunit alpha homolog (329 aa).

The 276-residue stretch at 22 to 297 (YEKIRIIGEG…VEQVVGSKYF (276 aa)) folds into the Protein kinase domain. Residues 28–36 (IGEGTFGQV) and Lys-49 each bind ATP. Asp-139 serves as the catalytic Proton acceptor.

Belongs to the protein kinase superfamily. CMGC Ser/Thr protein kinase family. CDC2/CDKX subfamily. Component of the CTDK-I complex.

Its subcellular location is the nucleus. It is found in the nucleolus. It catalyses the reaction [DNA-directed RNA polymerase] + ATP = phospho-[DNA-directed RNA polymerase] + ADP + H(+). Its function is as follows. Catalytic subunit of the CTDK-I complex, which hyperphosphorylates the C-terminal heptapeptide repeat domain (CTD) of the largest RNA polymerase II subunit. Involved in RNA polymerase II transcriptional elongation and pre-mRNA 3'-end processing. The chain is Probable CTD kinase subunit alpha homolog (CTK1) from Encephalitozoon cuniculi (strain GB-M1) (Microsporidian parasite).